A 462-amino-acid polypeptide reads, in one-letter code: ATP synthase subunit beta (462 aa).

151–158 (GGAGVGKT) contributes to the ATP binding site.

The protein belongs to the ATPase alpha/beta chains family. F-type ATPases have 2 components, CF(1) - the catalytic core - and CF(0) - the membrane proton channel. CF(1) has five subunits: alpha(3), beta(3), gamma(1), delta(1), epsilon(1). CF(0) has three main subunits: a(1), b(2) and c(9-12). The alpha and beta chains form an alternating ring which encloses part of the gamma chain. CF(1) is attached to CF(0) by a central stalk formed by the gamma and epsilon chains, while a peripheral stalk is formed by the delta and b chains.

Its subcellular location is the cell inner membrane. The enzyme catalyses ATP + H2O + 4 H(+)(in) = ADP + phosphate + 5 H(+)(out). Produces ATP from ADP in the presence of a proton gradient across the membrane. The catalytic sites are hosted primarily by the beta subunits. In Chlorobium limicola, this protein is ATP synthase subunit beta.